The chain runs to 122 residues: Large ribosomal subunit protein uL14 (122 aa).

It belongs to the universal ribosomal protein uL14 family. Part of the 50S ribosomal subunit. Forms a cluster with proteins L3 and L19. In the 70S ribosome, L14 and L19 interact and together make contacts with the 16S rRNA in bridges B5 and B8.

Binds to 23S rRNA. Forms part of two intersubunit bridges in the 70S ribosome. The chain is Large ribosomal subunit protein uL14 from Rhodospirillum rubrum (strain ATCC 11170 / ATH 1.1.1 / DSM 467 / LMG 4362 / NCIMB 8255 / S1).